The sequence spans 100 residues: Large ribosomal subunit protein bL21 (100 aa).

This sequence belongs to the bacterial ribosomal protein bL21 family. Part of the 50S ribosomal subunit. Contacts protein L20.

Functionally, this protein binds to 23S rRNA in the presence of protein L20. The protein is Large ribosomal subunit protein bL21 of Mycoplasma pneumoniae (strain ATCC 29342 / M129 / Subtype 1) (Mycoplasmoides pneumoniae).